Consider the following 57-residue polypeptide: DNA-directed RNA polymerase subunit Rpo6 (57 aa).

This sequence belongs to the archaeal Rpo6/eukaryotic RPB6 RNA polymerase subunit family. As to quaternary structure, part of the RNA polymerase complex.

The protein localises to the cytoplasm. It catalyses the reaction RNA(n) + a ribonucleoside 5'-triphosphate = RNA(n+1) + diphosphate. In terms of biological role, DNA-dependent RNA polymerase (RNAP) catalyzes the transcription of DNA into RNA using the four ribonucleoside triphosphates as substrates. The chain is DNA-directed RNA polymerase subunit Rpo6 from Thermococcus gammatolerans (strain DSM 15229 / JCM 11827 / EJ3).